The primary structure comprises 332 residues: Phosphate acyltransferase (332 aa).

Belongs to the PlsX family. In terms of assembly, homodimer. Probably interacts with PlsY.

It localises to the cytoplasm. It carries out the reaction a fatty acyl-[ACP] + phosphate = an acyl phosphate + holo-[ACP]. It functions in the pathway lipid metabolism; phospholipid metabolism. Functionally, catalyzes the reversible formation of acyl-phosphate (acyl-PO(4)) from acyl-[acyl-carrier-protein] (acyl-ACP). This enzyme utilizes acyl-ACP as fatty acyl donor, but not acyl-CoA. The chain is Phosphate acyltransferase from Clostridium novyi (strain NT).